Reading from the N-terminus, the 480-residue chain is uncharacterized protein (480 aa).

A PUA domain is found at 131 to 207; that stretch reads KKIIKIKNDV…KVVKVRFFIK (77 aa).

It in the C-terminal section; belongs to the PAPS reductase family.

This is an uncharacterized protein from Methanocaldococcus jannaschii (strain ATCC 43067 / DSM 2661 / JAL-1 / JCM 10045 / NBRC 100440) (Methanococcus jannaschii).